The sequence spans 408 residues: NFATC2-interacting protein (408 aa).

The disordered stretch occupies residues 1-113 (MAEPVGKRGR…LDPGEAPLVP (113 aa)). Low complexity predominate over residues 24 to 40 (QRSPSRGTLDVVSVDLV). Residues serine 41, serine 43, serine 73, serine 77, serine 79, serine 81, and serine 116 each carry the phosphoserine modification. Glycyl lysine isopeptide (Lys-Gly) (interchain with G-Cter in SUMO2) cross-links involve residues lysine 118 and lysine 120. A disordered region spans residues 141–205 (EEEVELADSS…TKSRKHTRAL (65 aa)). The span at 169–181 (RTKDKEEKKKTEI) shows a compositional bias: basic and acidic residues. Residues serine 187, serine 190, and serine 193 each carry the phosphoserine modification. Residues 196 to 205 (TKSRKHTRAL) show a composition bias toward basic residues. Residues 197–220 (KSRKHTRALKKLSEVNKRLQDLRS) adopt a coiled-coil conformation. Serine 209 and serine 303 each carry phosphoserine. Residues threonine 305 and threonine 307 each carry the phosphothreonine modification. Positions 337–408 (LQLRVQGKEK…ESGDLIEVWG (72 aa)) constitute a Ubiquitin-like domain. Phosphoserine is present on residues serine 358 and serine 379.

Interacts with NFATC2, TRAF1, TRAF2 and PRMT1. Interacts with UBE2I/UBC9. Post-translationally, methylation at the N-terminus by PRMT1 modulates interaction with the NFAT complex and results in augmented cytokine production.

The protein resides in the nucleus. It localises to the cytoplasm. In T-helper 2 (Th2) cells, regulates the magnitude of NFAT-driven transcription of a specific subset of cytokine genes, including IL3, IL4, IL5 and IL13, but not IL2. Recruits PRMT1 to the IL4 promoter; this leads to enhancement of histone H4 'Arg-3'-methylation and facilitates subsequent histone acetylation at the IL4 locus, thus promotes robust cytokine expression. Down-regulates formation of poly-SUMO chains by UBE2I/UBC9. This is NFATC2-interacting protein (NFATC2IP) from Macaca fascicularis (Crab-eating macaque).